The following is a 158-amino-acid chain: PTS system fructose-specific EIIB component (158 aa).

Residues 1–98 form the PTS EIIB type-2 domain; sequence MKLVAVTSCP…AEAVVQKAVE (98 aa). The active-site Phosphocysteine intermediate is the C9. The residue at position 9 (C9) is a Phosphocysteine; by EIIA. The segment at 104 to 147 is disordered; sequence KTGSVTFGSGDDGEDADVGADDSSDDADAAESDEPVRRGGDPEK. Acidic residues predominate over residues 114 to 136; sequence DDGEDADVGADDSSDDADAAESD. Residues 137 to 147 show a composition bias toward basic and acidic residues; that stretch reads EPVRRGGDPEK.

Its subcellular location is the cytoplasm. It carries out the reaction D-fructose(out) + N(pros)-phospho-L-histidyl-[protein] = D-fructose 1-phosphate(in) + L-histidyl-[protein]. Its function is as follows. The phosphoenolpyruvate-dependent sugar phosphotransferase system (sugar PTS), a major carbohydrate active transport system, catalyzes the phosphorylation of incoming sugar substrates concomitantly with their translocation across the cell membrane. The enzyme II PtfABC PTS system is involved in fructose transport. This is PTS system fructose-specific EIIB component from Haloferax volcanii (strain ATCC 29605 / DSM 3757 / JCM 8879 / NBRC 14742 / NCIMB 2012 / VKM B-1768 / DS2) (Halobacterium volcanii).